We begin with the raw amino-acid sequence, 274 residues long: Large ribosomal subunit protein uL2cz (274 aa).

Disordered stretches follow at residues 1-25 and 224-274; these read MAIH…VKSN and NPVD…RRSK. Over residues 7–25 the composition is skewed to polar residues; the sequence is KTSTPSTRNGTVDSQVKSN.

The protein belongs to the universal ribosomal protein uL2 family. As to quaternary structure, part of the 50S ribosomal subunit.

It localises to the plastid. The protein localises to the chloroplast. In Atropa belladonna (Belladonna), this protein is Large ribosomal subunit protein uL2cz (rpl2-A).